Here is a 392-residue protein sequence, read N- to C-terminus: Probable inactive serine/threonine-protein kinase DDB_G0280855 (392 aa).

A Protein kinase domain is found at 46–349 (ITKKTIYACD…IERIIQHPYF (304 aa)). ATP-binding positions include 52–60 (YACDINGTM) and lysine 75.

It belongs to the protein kinase superfamily. CMGC Ser/Thr protein kinase family. MAP kinase subfamily.

In Dictyostelium discoideum (Social amoeba), this protein is Probable inactive serine/threonine-protein kinase DDB_G0280855.